We begin with the raw amino-acid sequence, 484 residues long: tRNA-2-methylthio-N(6)-dimethylallyladenosine synthase (484 aa).

An MTTase N-terminal domain is found at 36 to 153 (GKLYIKTHGC…LPELIRARRE (118 aa)). [4Fe-4S] cluster-binding residues include Cys-45, Cys-82, Cys-116, Cys-190, Cys-194, and Cys-197. The Radical SAM core domain maps to 176–415 (RAEGPSAFVS…HINAHAASIS (240 aa)). In terms of domain architecture, TRAM spans 416–479 (QSMVGSVQRV…SNSLRGRIQL (64 aa)). Residues 428-450 (EGPSRRDPNELTGKSENMRPVNF) form a disordered region.

The protein belongs to the methylthiotransferase family. MiaB subfamily. In terms of assembly, monomer. Requires [4Fe-4S] cluster as cofactor.

Its subcellular location is the cytoplasm. It carries out the reaction N(6)-dimethylallyladenosine(37) in tRNA + (sulfur carrier)-SH + AH2 + 2 S-adenosyl-L-methionine = 2-methylsulfanyl-N(6)-dimethylallyladenosine(37) in tRNA + (sulfur carrier)-H + 5'-deoxyadenosine + L-methionine + A + S-adenosyl-L-homocysteine + 2 H(+). Functionally, catalyzes the methylthiolation of N6-(dimethylallyl)adenosine (i(6)A), leading to the formation of 2-methylthio-N6-(dimethylallyl)adenosine (ms(2)i(6)A) at position 37 in tRNAs that read codons beginning with uridine. The protein is tRNA-2-methylthio-N(6)-dimethylallyladenosine synthase of Xanthomonas euvesicatoria pv. vesicatoria (strain 85-10) (Xanthomonas campestris pv. vesicatoria).